We begin with the raw amino-acid sequence, 132 residues long: DNA-directed RNA polymerase subunit omega (132 aa).

The interval 76-105 (EVDEPEQDAASIAEGQLTSGSQDEDEMPET) is disordered.

It belongs to the RNA polymerase subunit omega family. The RNAP catalytic core consists of 2 alpha, 1 beta, 1 beta' and 1 omega subunit. When a sigma factor is associated with the core the holoenzyme is formed, which can initiate transcription.

It carries out the reaction RNA(n) + a ribonucleoside 5'-triphosphate = RNA(n+1) + diphosphate. Functionally, promotes RNA polymerase assembly. Latches the N- and C-terminal regions of the beta' subunit thereby facilitating its interaction with the beta and alpha subunits. In Allorhizobium ampelinum (strain ATCC BAA-846 / DSM 112012 / S4) (Agrobacterium vitis (strain S4)), this protein is DNA-directed RNA polymerase subunit omega.